Reading from the N-terminus, the 548-residue chain is Chaperonin GroEL (548 aa).

Residues 30–33 (TLGP), K51, 87–91 (DGTTT), G415, 479–481 (NAA), and D495 contribute to the ATP site. Positions 525-548 (PKEDKTSDASSSPAGGMGGMGGMM) are disordered. Positions 539 to 548 (GGMGGMGGMM) are enriched in gly residues.

It belongs to the chaperonin (HSP60) family. Forms a cylinder of 14 subunits composed of two heptameric rings stacked back-to-back. Interacts with the co-chaperonin GroES.

It localises to the cytoplasm. The enzyme catalyses ATP + H2O + a folded polypeptide = ADP + phosphate + an unfolded polypeptide.. In terms of biological role, together with its co-chaperonin GroES, plays an essential role in assisting protein folding. The GroEL-GroES system forms a nano-cage that allows encapsulation of the non-native substrate proteins and provides a physical environment optimized to promote and accelerate protein folding. The protein is Chaperonin GroEL of Buchnera aphidicola subsp. Rhopalosiphum padi.